Here is a 177-residue protein sequence, read N- to C-terminus: Thymidine kinase (177 aa).

11–18 (GPMFSGKS) lines the ATP pocket. Catalysis depends on glutamate 83, which acts as the Proton acceptor. Phenylalanine 113 serves as a coordination point for substrate. Zn(2+)-binding residues include cysteine 138 and cysteine 141. 157-161 (IEIIG) lines the substrate pocket. Zn(2+) contacts are provided by cysteine 170 and cysteine 173.

It belongs to the thymidine kinase family. Homotetramer. Two molecules of substrate bind to each enzyme tetramer.

It carries out the reaction thymidine + ATP = dTMP + ADP + H(+). Phosphorylates thymidine and thymidine analogs, such as azidothymidine (AZT). Part of the salvage pathway for pyrimidine deoxyribonucleotide synthesis. In Homo sapiens (Human), this protein is Thymidine kinase (OPG101).